The sequence spans 731 residues: RNA-binding protein RMD9-like, mitochondrial (731 aa).

Over residues 1–10 (MIRLAQQTQV) the composition is skewed to polar residues. Disordered regions lie at residues 1-29 (MIRL…NSLT), 77-133 (GGNI…GNSI), and 590-630 (QNDR…FNNP). Residues 83–100 (NNNNHLAQNNSNNSNNHH) are compositionally biased toward low complexity. A compositionally biased stretch (basic residues) spans 101 to 122 (NNNRNHHHNNNRNHHQNNHNHS). Ser132 is modified (phosphoserine). The span at 598–617 (SNMNSTQISRTATPSPSLTP) shows a compositional bias: polar residues.

The protein belongs to the RMD9 family. As to quaternary structure, monomer. In terms of processing, phosphorylated. Phosphorylation promotes binding to RNA.

It localises to the mitochondrion inner membrane. Its function is as follows. May be involved in the processing or stability of mitochondrial mRNAs. In Saccharomyces cerevisiae (strain ATCC 204508 / S288c) (Baker's yeast), this protein is RNA-binding protein RMD9-like, mitochondrial.